The following is a 1221-amino-acid chain: Phosphoenolpyruvate carboxylase 2 (1221 aa).

Residue His-156 is part of the active site. Disordered stretches follow at residues 443–588 (TAAE…DPTF) and 642–661 (REPA…GGGG). 2 stretches are compositionally biased toward low complexity: residues 503-513 (TTTATAAAAAA) and 550-564 (PFRE…TAAS). 2 stretches are compositionally biased toward gly residues: residues 565 to 575 (GGAGGGGGGGA) and 648 to 661 (AHGG…GGGG). Lys-886 is an active-site residue.

The protein belongs to the PEPCase type 1 family. It depends on Mg(2+) as a cofactor.

It localises to the cytoplasm. It carries out the reaction oxaloacetate + phosphate = phosphoenolpyruvate + hydrogencarbonate. Through the carboxylation of phosphoenolpyruvate (PEP) it forms oxaloacetate, a four-carbon dicarboxylic acid source for the tricarboxylic acid cycle. This is Phosphoenolpyruvate carboxylase 2 from Chlamydomonas reinhardtii (Chlamydomonas smithii).